The sequence spans 406 residues: Argininosuccinate synthase (406 aa).

ATP is bound by residues 10-18 (AYSGGLDTS) and Ala-37. L-citrulline contacts are provided by Tyr-88 and Ser-93. Residue Gly-118 participates in ATP binding. L-aspartate is bound by residues Thr-120, Asn-124, and Asp-125. Asn-124 serves as a coordination point for L-citrulline. Residues Arg-128, Ser-179, Ser-188, Glu-264, and Tyr-276 each contribute to the L-citrulline site.

This sequence belongs to the argininosuccinate synthase family. Type 1 subfamily. Homotetramer.

It is found in the cytoplasm. It carries out the reaction L-citrulline + L-aspartate + ATP = 2-(N(omega)-L-arginino)succinate + AMP + diphosphate + H(+). The protein operates within amino-acid biosynthesis; L-arginine biosynthesis; L-arginine from L-ornithine and carbamoyl phosphate: step 2/3. In Azotobacter vinelandii (strain DJ / ATCC BAA-1303), this protein is Argininosuccinate synthase.